A 199-amino-acid polypeptide reads, in one-letter code: Pyridoxal 5'-phosphate synthase subunit PdxT (199 aa).

L-glutamine is bound at residue Gly-47 to Ser-49. The Nucleophile role is filled by Cys-79. L-glutamine-binding positions include Arg-106 and Ile-133–Arg-134. Catalysis depends on charge relay system residues His-169 and Glu-171.

Belongs to the glutaminase PdxT/SNO family. In the presence of PdxS, forms a dodecamer of heterodimers. Only shows activity in the heterodimer.

It carries out the reaction aldehydo-D-ribose 5-phosphate + D-glyceraldehyde 3-phosphate + L-glutamine = pyridoxal 5'-phosphate + L-glutamate + phosphate + 3 H2O + H(+). It catalyses the reaction L-glutamine + H2O = L-glutamate + NH4(+). The protein operates within cofactor biosynthesis; pyridoxal 5'-phosphate biosynthesis. Functionally, catalyzes the hydrolysis of glutamine to glutamate and ammonia as part of the biosynthesis of pyridoxal 5'-phosphate. The resulting ammonia molecule is channeled to the active site of PdxS. The sequence is that of Pyridoxal 5'-phosphate synthase subunit PdxT from Desulfitobacterium hafniense (strain Y51).